The sequence spans 333 residues: Tetraacyldisaccharide 4'-kinase (333 aa).

60–67 contacts ATP; the sequence is TVGGTGKT.

Belongs to the LpxK family.

The enzyme catalyses a lipid A disaccharide + ATP = a lipid IVA + ADP + H(+). The protein operates within glycolipid biosynthesis; lipid IV(A) biosynthesis; lipid IV(A) from (3R)-3-hydroxytetradecanoyl-[acyl-carrier-protein] and UDP-N-acetyl-alpha-D-glucosamine: step 6/6. In terms of biological role, transfers the gamma-phosphate of ATP to the 4'-position of a tetraacyldisaccharide 1-phosphate intermediate (termed DS-1-P) to form tetraacyldisaccharide 1,4'-bis-phosphate (lipid IVA). The polypeptide is Tetraacyldisaccharide 4'-kinase (Ectopseudomonas mendocina (strain ymp) (Pseudomonas mendocina)).